Consider the following 150-residue polypeptide: Transcriptional regulator MraZ (150 aa).

SpoVT-AbrB domains follow at residues 5–52 (VTHL…PLPD) and 81–124 (AHDL…DAEA).

This sequence belongs to the MraZ family. Forms oligomers.

The protein localises to the cytoplasm. It is found in the nucleoid. The chain is Transcriptional regulator MraZ from Alkalilimnicola ehrlichii (strain ATCC BAA-1101 / DSM 17681 / MLHE-1).